The chain runs to 824 residues: Mucosa-associated lymphoid tissue lymphoma translocation protein 1 (824 aa).

The tract at residues 1–27 is disordered; sequence MSLLGDPLQALPPSAAPTGPLLAPPAG. Position 2 is an N-acetylserine (S2). A compositionally biased stretch (low complexity) spans 11 to 27; that stretch reads LPPSAAPTGPLLAPPAG. A Death domain is found at 39-126; the sequence is RRLSELLDQA…EVLQLLSPPG (88 aa). 2 Ig-like C2-type domains span residues 125–201 and 212–305; these read PGIK…FEFS and PESF…KKVE. Position 135 is a phosphoserine (S135). Cystine bridges form between C147/C190 and C248/C290. Residues 348-562 form a caspase-like region; sequence IGNMNYREHP…SLSEKRALTD (215 aa). Positions 369–376 match the Nuclear export signal motif; the sequence is LTNLLRQL. Residues H415 and C464 contribute to the active site.

It belongs to the peptidase C14B family. In terms of assembly, homooligomer; forms oligomers which bind to TRAF6. Forms a complex with CARD14 and MALT1; resulting in the formation of a CBM (CARD14-BCL10-MALT1) complex. Forms a complex with CARD11 and MALT1; resulting in the formation of a CBM (CARD11-BCL10-MALT1) complex. Forms a complex with CARD9 and MALT1; resulting in the formation of a CBM (CARD9-BCL10-MALT1) complex. In terms of tissue distribution, highly expressed in peripheral blood mononuclear cells. Detected at lower levels in bone marrow, thymus and lymph node, and at very low levels in colon and lung.

Its subcellular location is the cytoplasm. It is found in the perinuclear region. It localises to the nucleus. In terms of biological role, protease that enhances BCL10-induced activation: acts via formation of CBM complexes that channel adaptive and innate immune signaling downstream of CARD domain-containing proteins (CARD9, CARD11 and CARD14) to activate NF-kappa-B and MAP kinase p38 pathways which stimulate expression of genes encoding pro-inflammatory cytokines and chemokines. Mediates BCL10 cleavage: MALT1-dependent BCL10 cleavage plays an important role in T-cell antigen receptor-induced integrin adhesion. Involved in the induction of T helper 17 cells (Th17) differentiation. Cleaves RC3H1 and ZC3H12A in response to T-cell receptor (TCR) stimulation which releases their cooperatively repressed targets to promote Th17 cell differentiation. Also mediates cleavage of N4BP1 in T-cells following TCR-mediated activation, leading to N4BP1 inactivation. May also have ubiquitin ligase activity: binds to TRAF6, inducing TRAF6 oligomerization and activation of its ligase activity. This Homo sapiens (Human) protein is Mucosa-associated lymphoid tissue lymphoma translocation protein 1.